A 1072-amino-acid polypeptide reads, in one-letter code: Carbamoyl phosphate synthase large chain (1072 aa).

Residues 1–401 (MPKRLDINTI…SLLKAVRSLE (401 aa)) are carboxyphosphate synthetic domain. ATP is bound by residues arginine 129, arginine 169, glycine 175, glycine 176, lysine 208, isoleucine 210, glutamate 215, glycine 241, valine 242, histidine 243, glutamine 284, and glutamate 298. Positions 133 to 327 (RTLMQELNEP…IAKLAAKIAV (195 aa)) constitute an ATP-grasp 1 domain. Mg(2+) contacts are provided by glutamine 284, glutamate 298, and asparagine 300. Mn(2+)-binding residues include glutamine 284, glutamate 298, and asparagine 300. Positions 402 to 546 (LGVYHLELEH…YSTYGDENES (145 aa)) are oligomerization domain. Residues 547–929 (VRTDRKSVVV…ALYKGLVASG (383 aa)) are carbamoyl phosphate synthetic domain. The 191-residue stretch at 671-861 (EAALTQLGIP…MANVATKVIL (191 aa)) folds into the ATP-grasp 2 domain. Positions 707, 746, 752, 777, 778, 779, 780, 820, and 832 each coordinate ATP. Mg(2+)-binding residues include glutamine 820, glutamate 832, and asparagine 834. 3 residues coordinate Mn(2+): glutamine 820, glutamate 832, and asparagine 834. In terms of domain architecture, MGS-like spans 930-1072 (INIPTHGSVI…QTKRHEVVHA (143 aa)). The interval 930 to 1072 (INIPTHGSVI…QTKRHEVVHA (143 aa)) is allosteric domain.

This sequence belongs to the CarB family. Composed of two chains; the small (or glutamine) chain promotes the hydrolysis of glutamine to ammonia, which is used by the large (or ammonia) chain to synthesize carbamoyl phosphate. Tetramer of heterodimers (alpha,beta)4. Mg(2+) is required as a cofactor. Mn(2+) serves as cofactor.

It catalyses the reaction hydrogencarbonate + L-glutamine + 2 ATP + H2O = carbamoyl phosphate + L-glutamate + 2 ADP + phosphate + 2 H(+). The catalysed reaction is hydrogencarbonate + NH4(+) + 2 ATP = carbamoyl phosphate + 2 ADP + phosphate + 2 H(+). The protein operates within amino-acid biosynthesis; L-arginine biosynthesis; carbamoyl phosphate from bicarbonate: step 1/1. It participates in pyrimidine metabolism; UMP biosynthesis via de novo pathway; (S)-dihydroorotate from bicarbonate: step 1/3. In terms of biological role, large subunit of the glutamine-dependent carbamoyl phosphate synthetase (CPSase). CPSase catalyzes the formation of carbamoyl phosphate from the ammonia moiety of glutamine, carbonate, and phosphate donated by ATP, constituting the first step of 2 biosynthetic pathways, one leading to arginine and/or urea and the other to pyrimidine nucleotides. The large subunit (synthetase) binds the substrates ammonia (free or transferred from glutamine from the small subunit), hydrogencarbonate and ATP and carries out an ATP-coupled ligase reaction, activating hydrogencarbonate by forming carboxy phosphate which reacts with ammonia to form carbamoyl phosphate. This Bacillus cereus (strain G9842) protein is Carbamoyl phosphate synthase large chain.